The following is a 160-amino-acid chain: Large ribosomal subunit protein eL21A (160 aa).

The segment at 114–138 (AKRKEAKAQGKTVQLRRQPAPPAKA) is disordered.

The protein belongs to the eukaryotic ribosomal protein eL21 family. As to quaternary structure, component of the large ribosomal subunit (LSU). Mature yeast ribosomes consist of a small (40S) and a large (60S) subunit. The 40S small subunit contains 1 molecule of ribosomal RNA (18S rRNA) and at least 33 different proteins. The large 60S subunit contains 3 rRNA molecules (25S, 5.8S and 5S rRNA) and at least 46 different proteins.

The protein resides in the cytoplasm. Functionally, component of the ribosome, a large ribonucleoprotein complex responsible for the synthesis of proteins in the cell. The small ribosomal subunit (SSU) binds messenger RNAs (mRNAs) and translates the encoded message by selecting cognate aminoacyl-transfer RNA (tRNA) molecules. The large subunit (LSU) contains the ribosomal catalytic site termed the peptidyl transferase center (PTC), which catalyzes the formation of peptide bonds, thereby polymerizing the amino acids delivered by tRNAs into a polypeptide chain. The nascent polypeptides leave the ribosome through a tunnel in the LSU and interact with protein factors that function in enzymatic processing, targeting, and the membrane insertion of nascent chains at the exit of the ribosomal tunnel. The polypeptide is Large ribosomal subunit protein eL21A (rpl2101) (Schizosaccharomyces pombe (strain 972 / ATCC 24843) (Fission yeast)).